Here is a 2341-residue protein sequence, read N- to C-terminus: Pecanex-like protein 1 (2341 aa).

2 helical membrane-spanning segments follow: residues 28–50 and 57–74; these read ATFVNALHLYLWLFLLGLPFTLY and MIIVAVYCPVIAAVFIVL. A disordered region spans residues 98–163; the sequence is FTDQRTKAEQ…SNQIGSGSSR (66 aa). N-linked (GlcNAc...) asparagine glycosylation is present at N109. A compositionally biased stretch (polar residues) spans 143-163; the sequence is SSRNSYAGLDPSNQIGSGSSR. N-linked (GlcNAc...) asparagine glycosylation is present at N215. Disordered regions lie at residues 270–294, 311–331, and 344–689; these read HSHSYRKDHRPRGVPRTSSSAVAFP, DPVSELESSKPLSGSKESLVE, and DLKI…TRAR. The segment covering 272-282 has biased composition (basic residues); the sequence is HSYRKDHRPRG. Polar residues-rich tracts occupy residues 320–331 and 347–356; these read KPLSGSKESLVE and INTSQPPTKS. N348 carries an N-linked (GlcNAc...) asparagine glycan. Over residues 370-388 the composition is skewed to low complexity; the sequence is SLRSLSTRSSGSTESYCSG. N394 carries N-linked (GlcNAc...) asparagine glycosylation. The segment covering 394–404 has biased composition (polar residues); the sequence is NSTVSSYKSEQ. 3 stretches are compositionally biased toward basic and acidic residues: residues 430 to 455, 465 to 478, and 527 to 544; these read KKECCAGPEEKNSCASDKRTSSEKIA, HEAKDPTPSDEMHN, and SKVRKDVGGKQKEGDVRP. Over residues 554 to 569 the composition is skewed to basic residues; that stretch reads ASAHKSGRRRTGKKRA. A compositionally biased stretch (low complexity) spans 605–635; sequence QSDLSRASSVQSAHQFSSDSSSSTTSHSCQS. N702 carries N-linked (GlcNAc...) asparagine glycosylation. Residues 756-834 are disordered; it reads QVAFPEGEEQ…STAQVKVQSR (79 aa). Positions 814 to 832 are enriched in low complexity; the sequence is LSLQDGQQGQQSTAQVKVQ. 2 N-linked (GlcNAc...) asparagine glycosylation sites follow: N852 and N863. Transmembrane regions (helical) follow at residues 1003-1025, 1032-1049, and 1067-1089; these read ILENVLAVILAILVAFLGSILLI, IWVFQFCLVIASCQYSLL, and IAYSRPVYFCICCGLIWLLDYGS. An N-linked (GlcNAc...) asparagine glycan is attached at N1091. Residues 1110–1132 form a helical membrane-spanning segment; it reads FISARDLVIVFTLCFPIVFFIGL. A glycan (N-linked (GlcNAc...) asparagine) is linked at N1155. The next 4 helical transmembrane spans lie at 1160-1182, 1194-1213, 1266-1288, and 1295-1312; these read LLAALYSFICSIVAVALLYGLCY, IPVLFSIFCGLLVAVSYHLS, LVVCIVIGVLYFAIHVSTVFTVL, and VLYTLVGFVGFVTHYVLP. 5 N-linked (GlcNAc...) asparagine glycosylation sites follow: N1579, N1720, N1982, N2062, and N2072. 2 disordered regions span residues 2062-2120 and 2217-2237; these read NATT…SPAR and GQSSATDAQPGNTLSPANNSH. Polar residues-rich tracts occupy residues 2069 to 2078, 2096 to 2114, and 2217 to 2236; these read PHSNVTQGSI, YPPTLGTSHSSHSVQSGLV, and GQSSATDAQPGNTLSPANNS. N-linked (GlcNAc...) asparagine glycans are attached at residues N2234 and N2260.

This sequence belongs to the pecanex family.

It localises to the membrane. This is Pecanex-like protein 1 from Homo sapiens (Human).